The chain runs to 2559 residues: Stabilin-2 (2559 aa).

The signal sequence occupies residues 1 to 28; the sequence is MARSKLLLGKLLPLILIFLGLLVQNACS. At 29–2464 the chain is on the extracellular side; sequence PTEAPELTKR…PPTAATAAHS (2436 aa). Asparagine 71 carries an N-linked (GlcNAc...) asparagine glycan. 5 consecutive EGF-like domains span residues 116–156, 164–201, 203–244, 245–284, and 330–370; these read DCME…TACE, FGPN…PRCD, PIPE…QTCK, PINP…QVCL, and MTDI…LNCY. 3 disulfides stabilise this stretch: cysteine 120-cysteine 134, cysteine 128-cysteine 144, and cysteine 146-cysteine 155. An N-linked (GlcNAc...) asparagine glycan is attached at asparagine 167. 12 disulfide bridges follow: cysteine 168/cysteine 179, cysteine 172/cysteine 189, cysteine 191/cysteine 200, cysteine 207/cysteine 218, cysteine 212/cysteine 230, cysteine 232/cysteine 243, cysteine 249/cysteine 260, cysteine 254/cysteine 270, cysteine 272/cysteine 283, cysteine 334/cysteine 346, cysteine 340/cysteine 356, and cysteine 358/cysteine 369. Asparagine 345 is a glycosylation site (N-linked (GlcNAc...) asparagine). 2 FAS1 domains span residues 379 to 512 and 522 to 659; these read ELNT…DRAM and NPQQ…TGVL. N-linked (GlcNAc...) asparagine glycans are attached at residues asparagine 572, asparagine 626, asparagine 673, and asparagine 691. Positions 743–783 constitute an EGF-like 6 domain; that stretch reads DCNPCPGGFMNPCSGNGQCIDGLGGNGTCICEDGFQGSRCQ. Intrachain disulfides connect cysteine 747/cysteine 761, cysteine 755/cysteine 771, and cysteine 773/cysteine 782. N-linked (GlcNAc...) asparagine glycosylation occurs at asparagine 768. Asparagine 796 carries N-linked (GlcNAc...) asparagine glycosylation. 4 consecutive EGF-like domains span residues 833-873, 874-917, 918-960, and 961-1002; these read QTSA…TLCS, KKDP…RDCV, EINS…IDCE, and PIIS…VLCY. Disulfide bonds link cysteine 837–cysteine 850, cysteine 844–cysteine 859, cysteine 861–cysteine 872, cysteine 878–cysteine 893, cysteine 887–cysteine 903, cysteine 905–cysteine 916, cysteine 922–cysteine 936, cysteine 930–cysteine 946, cysteine 948–cysteine 959, cysteine 965–cysteine 978, cysteine 972–cysteine 988, and cysteine 990–cysteine 1001. N-linked (GlcNAc...) asparagine glycosylation is present at asparagine 854. A glycan (N-linked (GlcNAc...) asparagine) is linked at asparagine 933. FAS1 domains are found at residues 1002–1135 and 1145–1273; these read YGNV…NKVL and LPSL…EKVL. 5 N-linked (GlcNAc...) asparagine glycosylation sites follow: asparagine 1024, asparagine 1036, asparagine 1108, asparagine 1255, and asparagine 1283. The 66-residue stretch at 1350-1415 folds into the Laminin EGF-like 1 domain; the sequence is PQCQACPGKG…CSCVHGRCNQ (66 aa). 18 disulfides stabilise this stretch: cysteine 1355–cysteine 1369, cysteine 1363–cysteine 1379, cysteine 1381–cysteine 1390, cysteine 1402–cysteine 1413, cysteine 1406–cysteine 1423, cysteine 1425–cysteine 1434, cysteine 1443–cysteine 1453, cysteine 1447–cysteine 1463, cysteine 1465–cysteine 1476, cysteine 1482–cysteine 1495, cysteine 1489–cysteine 1505, cysteine 1507–cysteine 1518, cysteine 1524–cysteine 1537, cysteine 1531–cysteine 1547, cysteine 1549–cysteine 1560, cysteine 1566–cysteine 1579, cysteine 1573–cysteine 1589, and cysteine 1591–cysteine 1602. Asparagine 1374 and asparagine 1386 each carry an N-linked (GlcNAc...) asparagine glycan. EGF-like domains follow at residues 1439 to 1477, 1478 to 1519, 1520 to 1561, and 1562 to 1603; these read TTDN…TVCT, AINA…IVCL, EINP…KVCT, and LINV…IVCR. N-linked (GlcNAc...) asparagine glycosylation is present at asparagine 1444. Asparagine 1472 carries an N-linked (GlcNAc...) asparagine glycan. A glycan (N-linked (GlcNAc...) asparagine) is linked at asparagine 1580. FAS1 domains follow at residues 1603-1731 and 1747-1888; these read RGSI…DTLL and VLLN…DCLL. Asparagine 1750 carries N-linked (GlcNAc...) asparagine glycosylation. One can recognise a Laminin EGF-like 2 domain in the interval 1965-2030; that stretch reads PDCQACPGGP…GCSEHGQCDE (66 aa). 17 disulfide bridges follow: cysteine 1970–cysteine 1984, cysteine 1978–cysteine 1994, cysteine 1996–cysteine 2005, cysteine 2017–cysteine 2028, cysteine 2022–cysteine 2038, cysteine 2040–cysteine 2049, cysteine 2059–cysteine 2069, cysteine 2063–cysteine 2075, cysteine 2077–cysteine 2088, cysteine 2094–cysteine 2107, cysteine 2101–cysteine 2116, cysteine 2118–cysteine 2129, cysteine 2135–cysteine 2149, cysteine 2143–cysteine 2159, cysteine 2161–cysteine 2172, cysteine 2228–cysteine 2296, and cysteine 2252–cysteine 2273. N-linked (GlcNAc...) asparagine glycosylation occurs at asparagine 2001. EGF-like domains lie at 2055–2089, 2090–2130, and 2131–2173; these read VIPV…ITCT, VVDF…HSCT, and EIDP…RDCE. N-linked (GlcNAc...) asparagine glycosylation is present at asparagine 2072. The region spanning 2206-2298 is the Link domain; the sequence is GVFHLRSPLG…SEMWDVFCYR (93 aa). Asparagine 2287, asparagine 2303, asparagine 2375, asparagine 2391, and asparagine 2400 each carry an N-linked (GlcNAc...) asparagine glycan. Positions 2318–2452 constitute an FAS1 7 domain; the sequence is NGNLLQVLMS…GVLHIISEPL (135 aa). The helical transmembrane segment at 2465 to 2485 threads the bilayer; sequence GLGTGIFCAVVLVTGAIALAA. Topologically, residues 2486–2559 are cytoplasmic; sequence YSYFRLNQRT…NSDPLGALRS (74 aa). Serine 2503 bears the Phosphoserine mark. The segment at 2510–2520 is interaction with TMSB4X; that stretch reads LAFGKQQPESI. The disordered stretch occupies residues 2514–2559; it reads KQQPESITNPLYETSTPAAPEPSCDPFTDSGERELENSDPLGALRS. Polar residues predominate over residues 2516-2530; it reads QPESITNPLYETSTP.

Interacts with heparin, alpha-M/beta-2 integrin (ITGAM and ITGB2), and thymosin beta 4 (TMSB4X). Interacts with GULP1. Associates with clathrin and adapter protein AP-2; in liver sinusoidal endothelial cells (LSECs). Glycosylated. Post-translationally, proteolytically processed to yield a smaller protein. In terms of tissue distribution, expressed in endothelial sinuses of liver, lymph nodes, bone marrow, spleen and in specialised structures of eye, heart, brain and kidney. Expression is detected in corneal and lens epithelium, in mesenchymal cells of the heart valves, in the ependymal cells lining the ventricles in the brain, and in the prismatic epithelial cells covering the renal papillae.

The protein resides in the cytoplasm. Its subcellular location is the cell membrane. Phosphatidylserine receptor that enhances the engulfment of apoptotic cells. Hyaluronan receptor that binds to and mediates endocytosis of hyaluronic acid (HA). Also acts, in different species, as a primary systemic scavenger receptor for heparin (Hep), chondroitin sulfate (CS), dermatan sulfate (DS), nonglycosaminoglycan (GAG), acetylated low-density lipoprotein (AcLDL), pro-collagen propeptides and advanced glycation end products (AGE). May serve to maintain tissue integrity by supporting extracellular matrix turnover or it may contribute to maintaining fluidity of bodily liquids by resorption of hyaluronan. Counter receptor which plays an important role in lymphocyte recruitment in the hepatic vasculature. Binds to both Gram-positive and Gram-negative bacteria and may play a role in defense against bacterial infection. The proteolytically processed short form also functions as an endocytosis receptor for heparin internalization as well as HA and CS. The protein is Stabilin-2 of Mus musculus (Mouse).